The chain runs to 424 residues: UDP-N-acetylglucosamine 1-carboxyvinyltransferase (424 aa).

22-23 (KN) contacts phosphoenolpyruvate. A UDP-N-acetyl-alpha-D-glucosamine-binding site is contributed by Arg-93. Cys-117 (proton donor) is an active-site residue. Residue Cys-117 is modified to 2-(S-cysteinyl)pyruvic acid O-phosphothioketal. UDP-N-acetyl-alpha-D-glucosamine contacts are provided by residues 162 to 165 (KVSV), Asp-307, and Ile-329.

The protein belongs to the EPSP synthase family. MurA subfamily.

It localises to the cytoplasm. It carries out the reaction phosphoenolpyruvate + UDP-N-acetyl-alpha-D-glucosamine = UDP-N-acetyl-3-O-(1-carboxyvinyl)-alpha-D-glucosamine + phosphate. It functions in the pathway cell wall biogenesis; peptidoglycan biosynthesis. Cell wall formation. Adds enolpyruvyl to UDP-N-acetylglucosamine. This chain is UDP-N-acetylglucosamine 1-carboxyvinyltransferase, found in Glaesserella parasuis serovar 5 (strain SH0165) (Haemophilus parasuis).